We begin with the raw amino-acid sequence, 582 residues long: ATP-dependent lipid A-core flippase (582 aa).

Transmembrane regions (helical) follow at residues 16–36 (LWPT…ALIL), 64–84 (LMWM…TSYI), 153–173 (IIGL…ILIV), 253–273 (PIIQ…ASFP), and 275–295 (VMDS…IALM). The ABC transmembrane type-1 domain maps to 28–310 (IVAGVALILN…LTNVNAQFQR (283 aa)). The ABC transporter domain maps to 342-578 (VEFRNVTFTY…RGVYAQLHKM (237 aa)). 376–383 (GRSGSGKS) is an ATP binding site.

It belongs to the ABC transporter superfamily. Lipid exporter (TC 3.A.1.106) family. In terms of assembly, homodimer.

It is found in the cell inner membrane. The catalysed reaction is ATP + H2O + lipid A-core oligosaccharideSide 1 = ADP + phosphate + lipid A-core oligosaccharideSide 2.. Involved in lipopolysaccharide (LPS) biosynthesis. Translocates lipid A-core from the inner to the outer leaflet of the inner membrane. Transmembrane domains (TMD) form a pore in the inner membrane and the ATP-binding domain (NBD) is responsible for energy generation. The protein is ATP-dependent lipid A-core flippase of Escherichia coli O6:K15:H31 (strain 536 / UPEC).